The primary structure comprises 815 residues: Translation initiation factor IF-2 (815 aa).

The tr-type G domain maps to Ala-315–Glu-482. Positions Gly-324–Thr-331 are G1. A GTP-binding site is contributed by Gly-324–Thr-331. The tract at residues Gly-349–His-353 is G2. Residues Asp-370–Gly-373 are G3. GTP contacts are provided by residues Asp-370–His-374 and Asn-424–Asp-427. The G4 stretch occupies residues Asn-424–Asp-427. Residues Ser-460–Tyr-462 are G5.

Belongs to the TRAFAC class translation factor GTPase superfamily. Classic translation factor GTPase family. IF-2 subfamily.

The protein localises to the cytoplasm. Its function is as follows. One of the essential components for the initiation of protein synthesis. Protects formylmethionyl-tRNA from spontaneous hydrolysis and promotes its binding to the 30S ribosomal subunits. Also involved in the hydrolysis of GTP during the formation of the 70S ribosomal complex. This Ruthia magnifica subsp. Calyptogena magnifica protein is Translation initiation factor IF-2.